A 336-amino-acid polypeptide reads, in one-letter code: Galactinol synthase 6 (336 aa).

K106 is a catalytic residue. The Mn(2+) site is built by D122, D124, and H260.

This sequence belongs to the glycosyltransferase 8 family. Galactosyltransferase subfamily. It depends on a divalent metal cation as a cofactor.

The protein localises to the cytoplasm. The catalysed reaction is myo-inositol + UDP-alpha-D-galactose = alpha-D-galactosyl-(1-&gt;3)-1D-myo-inositol + UDP + H(+). Galactinol synthase involved in the biosynthesis of raffinose family oligosaccharides (RFOs) that function as osmoprotectants. May promote plant stress tolerance. This is Galactinol synthase 6 (GOLS6) from Arabidopsis thaliana (Mouse-ear cress).